Here is a 214-residue protein sequence, read N- to C-terminus: Probable transaldolase (214 aa).

The active-site Schiff-base intermediate with substrate is the lysine 83.

The protein belongs to the transaldolase family. Type 3B subfamily.

The protein localises to the cytoplasm. It carries out the reaction D-sedoheptulose 7-phosphate + D-glyceraldehyde 3-phosphate = D-erythrose 4-phosphate + beta-D-fructose 6-phosphate. It participates in carbohydrate degradation; pentose phosphate pathway; D-glyceraldehyde 3-phosphate and beta-D-fructose 6-phosphate from D-ribose 5-phosphate and D-xylulose 5-phosphate (non-oxidative stage): step 2/3. Functionally, transaldolase is important for the balance of metabolites in the pentose-phosphate pathway. The chain is Probable transaldolase from Geobacter sulfurreducens (strain ATCC 51573 / DSM 12127 / PCA).